Reading from the N-terminus, the 149-residue chain is uncharacterized protein (149 aa).

This is an uncharacterized protein from Methanocaldococcus jannaschii (strain ATCC 43067 / DSM 2661 / JAL-1 / JCM 10045 / NBRC 100440) (Methanococcus jannaschii).